Consider the following 568-residue polypeptide: MGSDGDKKKKFIVAGSVSGFLVIMVVSVAVVTSKHSPKDDENHIRKTTKAVQAVCAPTDFKDTCVNSLMGASPDSDDPVDLIKLGFKVTIKSINESLEKASGDIKAKADKNPEAKGAFELCEKLMIDAIDDLKKCMDHGFSVDQIEVFVEDLRVWLSGSIAFQQTCMDSFGEIKSNLMQDMLKIFKTSRELSSNSLAMVTRISTLIPNSNLTGLTGALAKYARKLLSTEDSIPTWVGPEARRLMAAQGGGPGPVKANAVVAQDGTGQFKTITDALNAVPKGNKVPFIIHIKEGIYKEKVTVTKKMPHVTFIGDGPNKTLITGSLNFGIGKVKTFLTATITIEGDHFTAKNIGIENTAGPEGGQAVALRVSADYAVFHSCQIDGHQDTLYVHSHRQFYRDCTVSGTVDFIFGDAKCILQNCKIVVRKPNKGQTCMVTAQGRSNVRESTGLVLHGCHITGDPAYIPMKSVNKAYLGRPWKEFSRTIIMKTTIDDVIDPAGWLPWSGDFALKTLYYAEHMNTGPGSNQAQRVKWPGIKKLTPQDALLYTGDRFLRGDTWIPQTQVPYTAKV.

Positions 1 to 33 are cleaved as a signal peptide; the sequence is MGSDGDKKKKFIVAGSVSGFLVIMVVSVAVVTS. Residues 45 to 198 are pectinesterase inhibitor 23; it reads RKTTKAVQAV…RELSSNSLAM (154 aa). 3 N-linked (GlcNAc...) asparagine glycosylation sites follow: Asn-94, Asn-210, and Asn-316. Residues 251 to 548 form a pectinesterase 23 region; that stretch reads PGPVKANAVV…PQDALLYTGD (298 aa). Substrate contacts are provided by Thr-333 and Gln-363. The active-site Proton donor; for pectinesterase activity is the Asp-386. Residues Cys-400 and Cys-420 are joined by a disulfide bond. The active-site Nucleophile; for pectinesterase activity is the Asp-407. 2 residues coordinate substrate: Arg-475 and Trp-477.

The protein in the N-terminal section; belongs to the PMEI family. This sequence in the C-terminal section; belongs to the pectinesterase family. In terms of tissue distribution, expressed in mature pollen grains in the anthers and on the stigma. Found in pollen tubes within the style.

It localises to the secreted. The protein resides in the cell wall. The catalysed reaction is [(1-&gt;4)-alpha-D-galacturonosyl methyl ester](n) + n H2O = [(1-&gt;4)-alpha-D-galacturonosyl](n) + n methanol + n H(+). It functions in the pathway glycan metabolism; pectin degradation; 2-dehydro-3-deoxy-D-gluconate from pectin: step 1/5. In terms of biological role, acts in the modification of cell walls via demethylesterification of cell wall pectin. In Arabidopsis thaliana (Mouse-ear cress), this protein is Probable pectinesterase/pectinesterase inhibitor 23 (PME23).